Reading from the N-terminus, the 189-residue chain is Apolipoprotein D (189 aa).

A signal peptide spans 1–20 (MVPVLLLLPALAGLFGAAEG). A Pyrrolidone carboxylic acid modification is found at glutamine 21. 2 cysteine pairs are disulfide-bonded: cysteine 28-cysteine 134 and cysteine 61-cysteine 185. N-linked (GlcNAc...) asparagine glycosylation is found at asparagine 65 and asparagine 98.

This sequence belongs to the calycin superfamily. Lipocalin family. As to quaternary structure, homodimer.

The protein localises to the secreted. APOD occurs in the macromolecular complex with lecithin-transport and binding of bilin. Appears to be able to transport a variety of ligands in a number of different contexts. The polypeptide is Apolipoprotein D (APOD) (Bos taurus (Bovine)).